Here is a 505-residue protein sequence, read N- to C-terminus: RNA-splicing ligase RtcB homolog (505 aa).

Residues D119, C122, H227, H259, and H353 each contribute to the Mn(2+) site. Residue N226 to E230 coordinates GMP. GMP-binding positions include H353–N354, G402–M405, S409, H428–G431, and K504. Catalysis depends on H428, which acts as the GMP-histidine intermediate.

This sequence belongs to the RtcB family. Catalytic component of the tRNA-splicing ligase complex. The cofactor is Mn(2+).

It carries out the reaction a 3'-end 3'-phospho-ribonucleotide-RNA + a 5'-end dephospho-ribonucleoside-RNA + GTP = a ribonucleotidyl-ribonucleotide-RNA + GMP + diphosphate. The enzyme catalyses a 3'-end 2',3'-cyclophospho-ribonucleotide-RNA + a 5'-end dephospho-ribonucleoside-RNA + GTP + H2O = a ribonucleotidyl-ribonucleotide-RNA + GMP + diphosphate + H(+). Catalytic subunit of the tRNA-splicing ligase complex that acts by directly joining spliced tRNA halves to mature-sized tRNAs by incorporating the precursor-derived splice junction phosphate into the mature tRNA as a canonical 3',5'-phosphodiester. May act as an RNA ligase with broad substrate specificity, and may function toward other RNAs. The sequence is that of RNA-splicing ligase RtcB homolog from Nematostella vectensis (Starlet sea anemone).